The sequence spans 381 residues: L-lactate dehydrogenase (381 aa).

Residues 1–380 form the FMN hydroxy acid dehydrogenase domain; it reads MIISSASDYR…KPEALVDLSK (380 aa). Tyr-24 contacts substrate. 2 residues coordinate FMN: Ser-106 and Gln-127. Residue Tyr-129 participates in substrate binding. Thr-155 is an FMN binding site. Position 164 (Arg-164) interacts with substrate. Lys-251 is a binding site for FMN. His-275 acts as the Proton acceptor in catalysis. A substrate-binding site is contributed by Arg-278. Residue 306–330 coordinates FMN; sequence DSGIRNGLDIVRMLALGADATMLGR.

It belongs to the FMN-dependent alpha-hydroxy acid dehydrogenase family. FMN is required as a cofactor.

The protein localises to the cell inner membrane. The enzyme catalyses (S)-lactate + A = pyruvate + AH2. Its function is as follows. Catalyzes the conversion of L-lactate to pyruvate. Is coupled to the respiratory chain. This is L-lactate dehydrogenase from Haemophilus influenzae (strain ATCC 51907 / DSM 11121 / KW20 / Rd).